A 406-amino-acid polypeptide reads, in one-letter code: Kelch domain-containing protein 1 (406 aa).

6 Kelch repeats span residues 24–76 (FLYV…CGAC), 80–134 (RLYV…VYKD), 135–181 (RLIY…TKTR), 208–258 (KGYV…AITD), 260–307 (KLFL…ACLG), and 311–361 (EIMV…LKSQ).

As to quaternary structure, component of a CRL5 E3 ubiquitin-protein ligase complex, also named ECS (Elongin BC-CUL2/5-SOCS-box protein) complex, composed of CUL5, Elongin BC (ELOB and ELOC), RBX1 and substrate-specific adapter KLHDC1.

The protein resides in the cytoplasm. Its subcellular location is the cytosol. It functions in the pathway protein modification; protein ubiquitination. Substrate-recognition component of a Cul5-RING (CRL5) E3 ubiquitin-protein ligase complex of the DesCEND (destruction via C-end degrons) pathway, which recognizes a C-degron located at the extreme C terminus of target proteins, leading to their ubiquitination and degradation. The C-degron recognized by the DesCEND pathway is usually a motif of less than ten residues and can be present in full-length proteins, truncated proteins or proteolytically cleaved forms. The CRL5(KLHDC1) complex mediates ubiquitination and degradation of truncated SELENOS selenoprotein produced by failed UGA/Sec decoding, which ends with a glycine. This Mus musculus (Mouse) protein is Kelch domain-containing protein 1.